The sequence spans 143 residues: Large-conductance mechanosensitive channel (143 aa).

A run of 2 helical transmembrane segments spans residues 10–30 (FAVK…GAFS) and 89–109 (GSFI…FLMV).

It belongs to the MscL family. In terms of assembly, homopentamer.

The protein localises to the cell inner membrane. Its function is as follows. Channel that opens in response to stretch forces in the membrane lipid bilayer. May participate in the regulation of osmotic pressure changes within the cell. The sequence is that of Large-conductance mechanosensitive channel from Burkholderia pseudomallei (strain 668).